The following is a 520-amino-acid chain: Ribonuclease Y (520 aa).

A helical transmembrane segment spans residues 3–23 (FILVLCTVSSLFVGGGTGIFL). A KH domain is found at 209–272 (TVTAVTLPSE…QVAKMALERL (64 aa)). In terms of domain architecture, HD spans 335-429 (VLRHSIEVAS…VQASDCLSGA (95 aa)).

This sequence belongs to the RNase Y family.

The protein resides in the cell membrane. Its function is as follows. Endoribonuclease that initiates mRNA decay. In Lawsonia intracellularis (strain PHE/MN1-00), this protein is Ribonuclease Y.